Consider the following 361-residue polypeptide: Phosphoserine aminotransferase (361 aa).

L-glutamate is bound at residue R42. Residues 76–77 (AR), W102, T153, D173, and Q196 contribute to the pyridoxal 5'-phosphate site. K197 is modified (N6-(pyridoxal phosphate)lysine). 238-239 (NT) is a pyridoxal 5'-phosphate binding site.

Belongs to the class-V pyridoxal-phosphate-dependent aminotransferase family. SerC subfamily. As to quaternary structure, homodimer. It depends on pyridoxal 5'-phosphate as a cofactor.

It is found in the cytoplasm. It carries out the reaction O-phospho-L-serine + 2-oxoglutarate = 3-phosphooxypyruvate + L-glutamate. The catalysed reaction is 4-(phosphooxy)-L-threonine + 2-oxoglutarate = (R)-3-hydroxy-2-oxo-4-phosphooxybutanoate + L-glutamate. Its pathway is amino-acid biosynthesis; L-serine biosynthesis; L-serine from 3-phospho-D-glycerate: step 2/3. The protein operates within cofactor biosynthesis; pyridoxine 5'-phosphate biosynthesis; pyridoxine 5'-phosphate from D-erythrose 4-phosphate: step 3/5. Its function is as follows. Catalyzes the reversible conversion of 3-phosphohydroxypyruvate to phosphoserine and of 3-hydroxy-2-oxo-4-phosphonooxybutanoate to phosphohydroxythreonine. The chain is Phosphoserine aminotransferase from Buchnera aphidicola subsp. Acyrthosiphon pisum (strain 5A).